We begin with the raw amino-acid sequence, 338 residues long: Aspartate-semialdehyde dehydrogenase (338 aa).

NADP(+) contacts are provided by residues 13–16 and 41–42; these read SGAV and RS. Residue arginine 101 coordinates phosphate. Cysteine 132 acts as the Acyl-thioester intermediate in catalysis. Substrate is bound at residue glutamine 159. NADP(+) contacts are provided by residues 162–163 and proline 187; that span reads SG. Residue lysine 216 participates in phosphate binding. Residue arginine 238 participates in substrate binding. The active-site Proton acceptor is the histidine 245. Asparagine 317 serves as a coordination point for NADP(+).

The protein belongs to the aspartate-semialdehyde dehydrogenase family. As to quaternary structure, homodimer.

The catalysed reaction is L-aspartate 4-semialdehyde + phosphate + NADP(+) = 4-phospho-L-aspartate + NADPH + H(+). Its pathway is amino-acid biosynthesis; L-lysine biosynthesis via DAP pathway; (S)-tetrahydrodipicolinate from L-aspartate: step 2/4. The protein operates within amino-acid biosynthesis; L-methionine biosynthesis via de novo pathway; L-homoserine from L-aspartate: step 2/3. It functions in the pathway amino-acid biosynthesis; L-threonine biosynthesis; L-threonine from L-aspartate: step 2/5. Catalyzes the NADPH-dependent formation of L-aspartate-semialdehyde (L-ASA) by the reductive dephosphorylation of L-aspartyl-4-phosphate. This Shewanella sp. (strain DB6705) protein is Aspartate-semialdehyde dehydrogenase.